The primary structure comprises 231 residues: MIP18 family protein YHR122W (231 aa).

Disordered stretches follow at residues 1–26 (MSEFLNENPDILEENQLPTRKEDSTK) and 75–100 (LTSDEDSLPAESEDESVAGGGKEEEE). An N-acetylserine modification is found at Ser-2. Residues 76–90 (TSDEDSLPAESEDES) are compositionally biased toward acidic residues.

Belongs to the MIP18 family.

In terms of biological role, may play a role in chromosome segregation through establishment of sister chromatid cohesion. This Saccharomyces cerevisiae (strain ATCC 204508 / S288c) (Baker's yeast) protein is MIP18 family protein YHR122W.